The chain runs to 499 residues: Guanosine-5'-triphosphate,3'-diphosphate pyrophosphatase (499 aa).

It belongs to the GppA/Ppx family. GppA subfamily.

It catalyses the reaction guanosine 3'-diphosphate 5'-triphosphate + H2O = guanosine 3',5'-bis(diphosphate) + phosphate + H(+). The protein operates within purine metabolism; ppGpp biosynthesis; ppGpp from GTP: step 2/2. Functionally, catalyzes the conversion of pppGpp to ppGpp. Guanosine pentaphosphate (pppGpp) is a cytoplasmic signaling molecule which together with ppGpp controls the 'stringent response', an adaptive process that allows bacteria to respond to amino acid starvation, resulting in the coordinated regulation of numerous cellular activities. This Klebsiella pneumoniae subsp. pneumoniae (strain ATCC 700721 / MGH 78578) protein is Guanosine-5'-triphosphate,3'-diphosphate pyrophosphatase.